The sequence spans 482 residues: Nicotine dehydrogenase (482 aa).

The tat-type signal signal peptide spans 1 to 38 (MSDKTKTNEGFSRRSFIGSAAVVTAGVAGLGAIDAASA). 7 residues coordinate FAD: Ala-64, Glu-83, Ala-84, Arg-85, Arg-91, Trp-108, and Val-279. Thr-381 is a binding site for (S)-nicotine. FAD is bound by residues Ala-453, Asn-462, and Ile-463.

Belongs to the flavin monoamine oxidase family. Monomer in solution. Homodimer in solution. Forms homodimers in the crystal. FAD serves as cofactor. Post-translationally, predicted to be exported by the Tat system. The position of the signal peptide cleavage has not been experimentally proven.

The protein resides in the periplasm. It catalyses the reaction (S)-nicotine + 2 Fe(III)-[cytochrome c] = N-methylmyosmine + 2 Fe(II)-[cytochrome c] + 2 H(+). It functions in the pathway alkaloid degradation; nicotine degradation. With respect to regulation, the catalytic rate is not significantly affected by pH. In terms of biological role, involved in nicotine degradation. Catalyzes the conversion of nicotine to N-methylmyosmine. N-methylmyosmine undergoes spontaneous hydrolysis to form pseudooxynicotine (PN). S-nicotine is the optimal substrate. Has lower activity with some nicotine analogs, but shows no activity towards neurotransmitters, including serotonin, dopamine, and norepinephrine, nicotine metabolites and common neuroactive drugs. The enzyme is stereospecific with poor activity with (R)-nicotine as the substrate. The c-type cytochrome protein CycN is the physiological electron acceptor. O(2) is a poor electron acceptor. This chain is Nicotine dehydrogenase, found in Pseudomonas putida (strain DSM 28022 / S16).